The chain runs to 80 residues: MKLTCVMIVAVLFLTAWTFVTADSIRALEDLFAKAPDEMENSGASPLNERDCRPVGQYCGIPYEHNWRCCSQLCAIICVS.

The N-terminal stretch at 1–22 (MKLTCVMIVAVLFLTAWTFVTA) is a signal peptide. Residues 23-50 (DSIRALEDLFAKAPDEMENSGASPLNER) constitute a propeptide that is removed on maturation. 3 cysteine pairs are disulfide-bonded: Cys52/Cys70, Cys59/Cys74, and Cys69/Cys78.

This sequence belongs to the conotoxin O1 superfamily. Expressed by the venom duct.

The protein localises to the secreted. Omega-conotoxins act at presynaptic membranes, they bind and block voltage-gated calcium channels (Cav). The sequence is that of Omega-conotoxin-like PuIA from Conus pulicarius (Flea-bitten cone).